Reading from the N-terminus, the 280-residue chain is MRLQDEVVLVTGGCAGLGRAIVDRFVCEGARVAVLDRSVAGLEELRAAHGDAVVAVEGDVRYLDSHKETVAKCVETFGKLDCYIGNAGVWDYSTALVEIPEDRLDEAFDEMYSINVKGYLLGVKAALGALYASRGSVIFTVSNAGFYPAGGGALYTGAKHAIVGMVKQLAYELGPHIRVNGIAPGGLGGSDLRGLKALDLAEVSLSKVPLGDMLKDILPTGQMASAEESTGAYVFFATRSETVPLTGSVLNYDGGIGVRGMSEANRGDLLDQFYSKGALV.

An NAD(+)-binding site is contributed by 9-33 (LVTGGCAGLGRAIVDRFVCEGARVA). Ser142 contacts substrate. Tyr155 acts as the Proton acceptor in catalysis.

This sequence belongs to the short-chain dehydrogenases/reductases (SDR) family.

It carries out the reaction (2R,3S)-3-phenylcyclohexa-3,5-diene-1,2-diol + NAD(+) = biphenyl-2,3-diol + NADH + H(+). Its pathway is xenobiotic degradation; biphenyl degradation; 2-hydroxy-2,4-pentadienoate and benzoate from biphenyl: step 2/4. This is Cis-2,3-dihydrobiphenyl-2,3-diol dehydrogenase (bphB) from Rhodococcus globerulus.